The sequence spans 278 residues: Trehalose monomycolate transport factor A (278 aa).

Met1 is a topological domain (periplasmic). A helical membrane pass occupies residues 2-22 (VPLWFTLSALCFVGAAVLLYV). The Cytoplasmic segment spans residues 23 to 278 (DIDRRRGLGR…NGREASHFQR (256 aa)). Residues 200 to 278 (PPVPQNGSQA…NGREASHFQR (79 aa)) are disordered. Over residues 269 to 278 (NGREASHFQR) the composition is skewed to basic and acidic residues.

In terms of assembly, monomer. Interacts (via N-terminus) with MmpL3; active trehalose monomycolate (TMM) biosynthesis is not required for the complex formation. Interacts with MSMEG_5308.

It localises to the cell inner membrane. The protein resides in the cell septum. The protein localises to the cell tip. Required for MmpL3-dependent trehalose monomycolate (TMM) transport to the cell wall. Required for growth and cell elongation. This is Trehalose monomycolate transport factor A from Mycolicibacterium smegmatis (strain ATCC 700084 / mc(2)155) (Mycobacterium smegmatis).